A 316-amino-acid polypeptide reads, in one-letter code: Methionyl-tRNA formyltransferase (316 aa).

Residue 108–111 coordinates (6S)-5,6,7,8-tetrahydrofolate; sequence SLLP.

Belongs to the Fmt family.

The catalysed reaction is L-methionyl-tRNA(fMet) + (6R)-10-formyltetrahydrofolate = N-formyl-L-methionyl-tRNA(fMet) + (6S)-5,6,7,8-tetrahydrofolate + H(+). Attaches a formyl group to the free amino group of methionyl-tRNA(fMet). The formyl group appears to play a dual role in the initiator identity of N-formylmethionyl-tRNA by promoting its recognition by IF2 and preventing the misappropriation of this tRNA by the elongation apparatus. This is Methionyl-tRNA formyltransferase from Heliobacterium modesticaldum (strain ATCC 51547 / Ice1).